The chain runs to 705 residues: MNKKKKYVHTKQFNSHDCGLACISSILKFHNLNYGIDFLLDLIGDKEGYSLRDLIVIFKKMGIKTRPLELQENKTFEALKQIKLPCIALLEGEEYGHYITIYEIRNNYLLVSDPDKDKITKIKKEDFESKFTNFILEIDKESIPEKEKDQKKHSYFFKDILFRNKLIVFVILLTSLFVVGLAVAGSFYIKFLVDLIIPRSLRESLITITLIFISMVLIRCIFDFVRSYLIIKLSYKVDKEMSNVYFNKVTKLPINFFENREDGEVISRFNDGIYIKDFFSANFVTAIIDIILILGLGVILYRTNNILFLTIILPILLLSCLAILFFDHLKKKNQKLMEDKAKSTSLLINFLKNMTTVYSLNKTSFFLEKFHLTYDKQLNSTFSVAKAVISNEILKGLIQNSFTIIILWVGTRQVLNDSMSLGTLLFINTLAAFLLSSLDRILSMQSDLQQAHVASIRFFDVVNYPVQQDSNENLTELDFIQNIKTVNLNIGADPMRYIVEDINLILDRKDKVLIIGESGTGKSTFAKSLSKLYKVPDKSIYLNGLDINRYDHLSIRKRIVYIDENPFLFKGTIKENLCMGEIFDQNEIENACIMSQCHEFICNLDKQYSYKLSENGSNLSTGQKQRLALARAILHQPQVLILDESLSNIDPDNTKLIYETLHRMDCLIILITHNDPSNFKYNKKLVFRNNRIIESSYSENKEYSI.

The Peptidase C39 domain occupies 12–138; that stretch reads QFNSHDCGLA…SKFTNFILEI (127 aa). Cys-18 is an active-site residue. The next 6 helical transmembrane spans lie at 167–187, 205–225, 281–301, 306–326, 388–408, and 418–438; these read IVFVILLTSLFVVGLAVAGSF, LITITLIFISMVLIRCIFDFV, ANFVTAIIDIILILGLGVILY, ILFLTIILPILLLSCLAILFF, VISNEILKGLIQNSFTIIILW, and SMSLGTLLFINTLAAFLLSSL. The region spanning 168–450 is the ABC transmembrane type-1 domain; sequence VFVILLTSLF…ILSMQSDLQQ (283 aa). The ABC transporter domain occupies 483–705; that stretch reads IKTVNLNIGA…SYSENKEYSI (223 aa). 516-523 contacts ATP; it reads GESGTGKS.

This sequence belongs to the ABC transporter superfamily. SunT family. In terms of assembly, homodimer.

It is found in the cell membrane. Its function is as follows. SunT (TC 3.A.1.112.4) is required for production of the lantibiotic sublancin-168, probably by both processing the signal peptide and exporting the resulting mature lantibiotic. The sequence is that of SPbeta prophage-derived sublancin-168-processing and transport ATP-binding protein SunT (sunT) from Bacillus subtilis (strain 168).